Here is a 105-residue protein sequence, read N- to C-terminus: Type VII secretion system extracellular protein D (105 aa).

Forms heterodimers with EsxB.

The protein localises to the secreted. In Staphylococcus aureus (strain USA300), this protein is Type VII secretion system extracellular protein D.